The primary structure comprises 1125 residues: Transient receptor potential cation channel subfamily A member 1 (1125 aa).

Over methionine 1–histidine 721 the chain is Cytoplasmic. 9 ANK repeats span residues glutamate 63–isoleucine 94, tyrosine 98–leucine 127, asparagine 131–leucine 161, asparagine 165–lysine 194, tryptophan 198–tyrosine 227, lysine 239–methionine 268, alanine 272–aspartate 301, asparagine 309–serine 338, and glutamate 342–isoleucine 371. Intrachain disulfides connect cysteine 193–cysteine 666, cysteine 463–cysteine 666, cysteine 609–cysteine 622, cysteine 622–cysteine 666, and cysteine 634–cysteine 859. The residue at position 395 (proline 395) is a 4-hydroxyproline; transient. 5 ANK repeats span residues aspartate 413–serine 442, aspartate 446–leucine 475, histidine 482–serine 511, asparagine 514–aspartate 543, and glutamate 548–leucine 577. The (E)-cinnamaldehyde site is built by cysteine 415 and cysteine 422. Cysteine 622 provides a ligand contact to (E)-cinnamaldehyde. Position 634 is a cysteine sulfenic acid (-SOH); transient; in hyperoxia (cysteine 634). Positions 642, 666, and 712 each coordinate (E)-cinnamaldehyde. The chain crosses the membrane as a helical span at residues methionine 722 to isoleucine 742. Over glutamine 743 to threonine 767 the chain is Extracellular. 2 N-linked (GlcNAc...) asparagine glycosylation sites follow: asparagine 749 and asparagine 755. A helical transmembrane segment spans residues leucine 768–tyrosine 788. Over cysteine 789 to tyrosine 806 the chain is Cytoplasmic. Ca(2+)-binding residues include glutamate 791, glutamine 794, asparagine 808, and glutamate 811. Residues asparagine 807–leucine 827 traverse the membrane as a helical segment. Topologically, residues asparagine 828–tyrosine 832 are extracellular. The helical transmembrane segment at methionine 833–leucine 853 threads the bilayer. Residues glutamine 854 to serine 876 are Cytoplasmic-facing. A Cysteine sulfenic acid (-SOH); transient; in hyperoxia modification is found at cysteine 859. Residues threonine 877–phenylalanine 897 form a helical membrane-spanning segment. Topologically, residues glutamine 898–proline 904 are extracellular. The pore-forming intramembrane region spans leucine 905–phenylalanine 925. Over leucine 926–proline 937 the chain is Extracellular. Residues valine 938–leucine 959 form a helical membrane-spanning segment. At isoleucine 960–phenylalanine 1125 the chain is on the cytoplasmic side. Residues methionine 1044–lysine 1073 are a coiled coil. Lysine 1048–lysine 1054 lines the a 1,2-diacyl-sn-glycero-3-phospho-(1D-myo-inositol) pocket.

The protein belongs to the transient receptor (TC 1.A.4) family. As to quaternary structure, homotetramer. Interacts with TMEM100. Interacts with EGLN1. Interacts with the scorpion wasabi receptor toxin at the same site that electrophiles but in a non-covalent manner. In terms of processing, TRPA1 activation by electrophiles occurs though covalent modification of specific cysteine residues in the N-terminal cytoplasmic domain. Post-translationally, hydroxylation is required for TRPA1 activity inhibition in normoxia. In hypoxia, the decrease in oxygen concentration diminishes the activity of the hydroxylase EGLN1, thus relieving TRPA1 from inhibition and ultimately leading to channel activation. Oxidation of Cys-634 and Cys-859 in hyperoxia may override the hydroxylase EGLN1-mediated inhibition, causing TRPA1 activation. Expressed in inner ear (at protein level). Specifically expressed in a subset of nociceptive neurons. Expressed in the same neurons that TRPV1. In contrast, it is not expressed in neurons expressing TRPM8. Expressed in the superior cervical ganglion of vagus nerve. Expressed in the inferior ganglion (nodose ganglion) of vagus nerve. Expressed in dorsal root ganglia neurons.

The protein localises to the cell membrane. The catalysed reaction is Ca(2+)(in) = Ca(2+)(out). It catalyses the reaction Mg(2+)(in) = Mg(2+)(out). The enzyme catalyses Na(+)(in) = Na(+)(out). It carries out the reaction K(+)(in) = K(+)(out). The catalysed reaction is Zn(2+)(in) = Zn(2+)(out). With respect to regulation, electrophilic ligands activate the channel by covalent modification of intracellular cysteines. Cys-622 plays a key role in covalent binding of electrophiles. Extracellular Ca(2+) both potentiates and inactivates TRPA1; a rapid potentiation follows by slow desensitization. Activated by increase in intracellular Ca(2+) concentration. Inhibited by the potent blocker of TRPV channels ruthenium red, A-967079. Activated by icilin, sulfhydryl reactive agent MTSEA, N-methyl maleimide (NMM), and PF-4840154. Also activated by hyperoxia. Activated by intracellular Zn(2+). TRPA1 activation may critically depend on the presence of small intracellular compounds such as polyphosphates. In terms of biological role, ligand-activated Ca(2+)-permeable, nonselective cation channel. Involved in pain detection and possibly also in cold perception, oxygen concentration perception, cough, itch, and inner ear function. Has a relatively high Ca(2+) selectivity, with a preference for divalent over monovalent cations (Ca(2+) &gt; Ba(2+) &gt; Mg(2+) &gt; NH4(+) &gt; Li(+) &gt; K(+)), the influx of cation into the cytoplasm, leads to membrane depolarization. Has a central role in the pain response to endogenous inflammatory mediators, such as bradykinin and to a diverse array of irritants. Activated by a large variety of structurally unrelated electrophilic and non-electrophilic chemical compounds, such as allylthiocyanate (AITC) from mustard oil or wasabi, cinnamaldehyde, diallyl disulfide (DADS) from garlic, and acrolein, an environmental irritant. Electrophilic ligands activate TRPA1 by interacting with critical N-terminal Cys residues in a covalent manner. Non-electrophile agonists bind at distinct sites in the transmembrane domain to promote channel activation. Also acts as an ionotropic cannabinoid receptor by being activated by delta(9)-tetrahydrocannabinol (THC), the psychoactive component of marijuana. May be a component for the mechanosensitive transduction channel of hair cells in inner ear, thereby participating in the perception of sounds. The chain is Transient receptor potential cation channel subfamily A member 1 from Mus musculus (Mouse).